A 261-amino-acid chain; its full sequence is MNIQDAQPSTLREMIKQGKLTGHTSGMAKGYVQANVVILPSKCAYDFLLFCFRNPKTCPLLDVSEKGNKSFTKYGVTADISTEVAAYRIYQYGELIETRANVDDLYTDDMVSFLIGCSFTFEHALLEAGIPIRHLEENHNVPMYVTNIPANPSGQFKGNITVSMRPMTMTQAIKATEITTRFKNVHGTPIHIGNPTEIGITDLALPDFGEPVTINENEVPVFWGCGVTPQSVALDAKPDLMITHAPGHMFITDIPDSQLSD.

Belongs to the D-glutamate cyclase family.

In Staphylococcus saprophyticus subsp. saprophyticus (strain ATCC 15305 / DSM 20229 / NCIMB 8711 / NCTC 7292 / S-41), this protein is Putative hydro-lyase SSP0308.